The sequence spans 180 residues: Large ribosomal subunit protein uL15 (180 aa).

The interval 1–62 (MKKERLEQAA…KTAGRGSKGQ (62 aa)) is disordered. The span at 35 to 44 (GAKKEKKRVG) shows a compositional bias: basic residues.

This sequence belongs to the universal ribosomal protein uL15 family. In terms of assembly, part of the 50S ribosomal subunit.

In terms of biological role, binds to the 23S rRNA. This Leptospira borgpetersenii serovar Hardjo-bovis (strain JB197) protein is Large ribosomal subunit protein uL15.